The chain runs to 376 residues: Alanine racemase (376 aa).

Catalysis depends on lysine 36, which acts as the Proton acceptor; specific for D-alanine. Lysine 36 carries the N6-(pyridoxal phosphate)lysine modification. Arginine 134 contributes to the substrate binding site. Tyrosine 266 functions as the Proton acceptor; specific for L-alanine in the catalytic mechanism. Substrate is bound at residue methionine 314.

Belongs to the alanine racemase family. Requires pyridoxal 5'-phosphate as cofactor.

The catalysed reaction is L-alanine = D-alanine. The protein operates within amino-acid biosynthesis; D-alanine biosynthesis; D-alanine from L-alanine: step 1/1. Functionally, catalyzes the interconversion of L-alanine and D-alanine. May also act on other amino acids. The chain is Alanine racemase (alr) from Nitratidesulfovibrio vulgaris (strain DP4) (Desulfovibrio vulgaris).